We begin with the raw amino-acid sequence, 389 residues long: uncharacterized protein (389 aa).

This is an uncharacterized protein from Treponema pallidum (strain Nichols).